The primary structure comprises 386 residues: 2-isopropylmalate synthase (386 aa).

Residues 12 to 265 form the Pyruvate carboxyltransferase domain; the sequence is VRIFDTTLRD…EVNIKTYKLY (254 aa). Residues Asp21, His203, His205, and Asn239 each contribute to the a divalent metal cation site.

Belongs to the alpha-IPM synthase/homocitrate synthase family. Homodimer. A divalent metal cation serves as cofactor.

The enzyme catalyses 3-methyl-2-oxobutanoate + acetyl-CoA + H2O = (2S)-2-isopropylmalate + CoA + H(+). It participates in amino-acid biosynthesis; L-leucine biosynthesis; L-leucine from 3-methyl-2-oxobutanoate: step 1/4. In terms of biological role, catalyzes the condensation of the acetyl group of acetyl-CoA with 3-methyl-2-oxobutanoate (2-oxoisovalerate) to form 3-carboxy-3-hydroxy-4-methylpentanoate (2-isopropylmalate). Carries out the first step of the leucine biosynthesis pathway. The chain is 2-isopropylmalate synthase (leuA) from Sulfurisphaera tokodaii (strain DSM 16993 / JCM 10545 / NBRC 100140 / 7) (Sulfolobus tokodaii).